A 60-amino-acid chain; its full sequence is Large ribosomal subunit protein uL30 (60 aa).

The protein belongs to the universal ribosomal protein uL30 family. In terms of assembly, part of the 50S ribosomal subunit.

The chain is Large ribosomal subunit protein uL30 from Desulforapulum autotrophicum (strain ATCC 43914 / DSM 3382 / VKM B-1955 / HRM2) (Desulfobacterium autotrophicum).